The chain runs to 793 residues: Sucrose synthase (793 aa).

The tract at residues 263 to 742 is GT-B glycosyltransferase; sequence MISRILIVSI…ALARVAERYT (480 aa).

It belongs to the glycosyltransferase 1 family. Homotetramer.

The catalysed reaction is an NDP-alpha-D-glucose + D-fructose = a ribonucleoside 5'-diphosphate + sucrose + H(+). It carries out the reaction ADP-alpha-D-glucose + D-fructose = sucrose + ADP + H(+). In terms of biological role, catalyzes the reversible conversion of sucrose and a nucleotide disphosphate (NDP) into fructose and NDP-glucose; although the reaction is freely reversible in vitro, the physiological reaction seems to be sucrose cleavage. Unlike characterized plant enzymes prefers ADP as a cosubstrate, whereas plants prefer UDP. The KM for sucrose is 45-fold lower in the presence of ADP than UDP. Its preference for ADP over UDP suggests it may directly link sucrose and glycogen metabolism. This Acidithiobacillus caldus (strain ATCC 51756 / DSM 8584 / KU) protein is Sucrose synthase.